Reading from the N-terminus, the 318-residue chain is tRNA uridine(34) hydroxylase (318 aa).

The Rhodanese domain maps to 125-219; the sequence is QDPNTVVIDA…YGTSKDTEGK (95 aa). The Cysteine persulfide intermediate role is filled by cysteine 179.

The protein belongs to the TrhO family.

It carries out the reaction uridine(34) in tRNA + AH2 + O2 = 5-hydroxyuridine(34) in tRNA + A + H2O. Catalyzes oxygen-dependent 5-hydroxyuridine (ho5U) modification at position 34 in tRNAs. The polypeptide is tRNA uridine(34) hydroxylase (Acholeplasma laidlawii (strain PG-8A)).